The sequence spans 291 residues: Glycine--tRNA ligase alpha subunit (291 aa).

It belongs to the class-II aminoacyl-tRNA synthetase family. As to quaternary structure, tetramer of two alpha and two beta subunits.

The protein resides in the cytoplasm. The catalysed reaction is tRNA(Gly) + glycine + ATP = glycyl-tRNA(Gly) + AMP + diphosphate. This Trichlorobacter lovleyi (strain ATCC BAA-1151 / DSM 17278 / SZ) (Geobacter lovleyi) protein is Glycine--tRNA ligase alpha subunit.